The following is a 64-amino-acid chain: Large ribosomal subunit protein bL35 (64 aa).

The tract at residues 1 to 54 is disordered; it reads MPKIKSNSGAAKRFKKTAHGFKHKQSFRSHILTKKSTKRKRQLRGMKQIHDADK. The span at 12–44 shows a compositional bias: basic residues; sequence KRFKKTAHGFKHKQSFRSHILTKKSTKRKRQLR.

The protein belongs to the bacterial ribosomal protein bL35 family.

The sequence is that of Large ribosomal subunit protein bL35 from Chromohalobacter salexigens (strain ATCC BAA-138 / DSM 3043 / CIP 106854 / NCIMB 13768 / 1H11).